The chain runs to 325 residues: Tetraacyldisaccharide 4'-kinase (325 aa).

53-60 provides a ligand contact to ATP; sequence SVGGNGKT.

The protein belongs to the LpxK family.

It carries out the reaction a lipid A disaccharide + ATP = a lipid IVA + ADP + H(+). Its pathway is glycolipid biosynthesis; lipid IV(A) biosynthesis; lipid IV(A) from (3R)-3-hydroxytetradecanoyl-[acyl-carrier-protein] and UDP-N-acetyl-alpha-D-glucosamine: step 6/6. In terms of biological role, transfers the gamma-phosphate of ATP to the 4'-position of a tetraacyldisaccharide 1-phosphate intermediate (termed DS-1-P) to form tetraacyldisaccharide 1,4'-bis-phosphate (lipid IVA). The polypeptide is Tetraacyldisaccharide 4'-kinase (Mannheimia succiniciproducens (strain KCTC 0769BP / MBEL55E)).